A 250-amino-acid polypeptide reads, in one-letter code: 2,5-dichloro-2,5-cyclohexadiene-1,4-diol dehydrogenase (250 aa).

9-34 contributes to the NAD(+) binding site; it reads IIVTGGGSGIGRATVELLVASGANVA. Ser141 provides a ligand contact to substrate. Tyr154 acts as the Proton acceptor in catalysis.

Belongs to the short-chain dehydrogenases/reductases (SDR) family.

The enzyme catalyses 2,5-dichlorocyclohexa-2,5-dien-1,4-diol + NAD(+) = 2,5-dichlorohydroquinone + NADH + H(+). It functions in the pathway xenobiotic degradation; gamma-hexachlorocyclohexane degradation. In terms of biological role, catalyzes the dehydrogenation of 2,5-dichloro-2,5-cyclohexadiene-1,4-diol (2,5-DDOL) to 2,5-dichlorohydroquinone (2,5-DCHQ), a step in the degradation of gamma-hexachlorocyclohexane (gamma-HCH or lindane). The protein is 2,5-dichloro-2,5-cyclohexadiene-1,4-diol dehydrogenase of Sphingobium indicum (strain DSM 16412 / CCM 7286 / MTCC 6364 / B90A).